We begin with the raw amino-acid sequence, 75 residues long: Conotoxin Vc6.15 (75 aa).

Positions 1–19 are cleaved as a signal peptide; that stretch reads MEKLTILLHVAAVLMSTQA. The propeptide occupies 20 to 41; sequence LIQEQRQKAKINLFSKRKPSAE. Intrachain disulfides connect C49–C62, C55–C66, and C61–C71.

This sequence belongs to the conotoxin O2 superfamily. Expressed by the venom duct.

It is found in the secreted. Its function is as follows. Inhibits voltage-gated ion channels. This Conus victoriae (Queen Victoria cone) protein is Conotoxin Vc6.15.